The sequence spans 442 residues: tRNA modification GTPase MnmE (442 aa).

The (6S)-5-formyl-5,6,7,8-tetrahydrofolate site is built by R21, E79, and K118. One can recognise a TrmE-type G domain in the interval 215 to 365; sequence GLKIAIVGKP…LENKLSSYCN (151 aa). GTP contacts are provided by residues 225-230, 244-250, and 269-272; these read NVGKSS, TNEAGTT, and DTAG. S229 and T250 together coordinate Mg(2+). Position 442 (K442) interacts with (6S)-5-formyl-5,6,7,8-tetrahydrofolate.

It belongs to the TRAFAC class TrmE-Era-EngA-EngB-Septin-like GTPase superfamily. TrmE GTPase family. In terms of assembly, homodimer. Heterotetramer of two MnmE and two MnmG subunits. It depends on K(+) as a cofactor.

Its subcellular location is the cytoplasm. Functionally, exhibits a very high intrinsic GTPase hydrolysis rate. Involved in the addition of a carboxymethylaminomethyl (cmnm) group at the wobble position (U34) of certain tRNAs, forming tRNA-cmnm(5)s(2)U34. The protein is tRNA modification GTPase MnmE of Mycoplasma mobile (strain ATCC 43663 / 163K / NCTC 11711) (Mesomycoplasma mobile).